A 280-amino-acid polypeptide reads, in one-letter code: Putative ABC transporter ATP-binding protein MTH_133 (280 aa).

The ABC transporter domain occupies 6-241 (IEAVDIRYTY…IDTIRGANLR (236 aa)). 39 to 46 (GPNGAGKS) serves as a coordination point for ATP.

The protein belongs to the ABC transporter superfamily.

It is found in the cell membrane. Probably part of an ABC transporter complex. Responsible for energy coupling to the transport system. The sequence is that of Putative ABC transporter ATP-binding protein MTH_133 from Methanothermobacter thermautotrophicus (strain ATCC 29096 / DSM 1053 / JCM 10044 / NBRC 100330 / Delta H) (Methanobacterium thermoautotrophicum).